The sequence spans 376 residues: Multiphosphoryl transfer protein (376 aa).

The PTS EIIA type-2 domain occupies 2 to 142 (FQLSVQDIHP…EELRALLMGE (141 aa)). Histidine 62 acts as the Tele-phosphohistidine intermediate; for EIIA activity in catalysis. Phosphohistidine; by HPr is present on histidine 62. Residues 156–284 (TLDVIASSLV…LTSDDALTDD (129 aa)) are m domain. In terms of domain architecture, HPr spans 285 to 375 (VLSAEFVVRN…DAIAAGLGEG (91 aa)). Histidine 299 acts as the Pros-phosphohistidine intermediate; for HPr activity in catalysis. The residue at position 299 (histidine 299) is a Phosphohistidine; by EI.

It is found in the cytoplasm. In terms of biological role, the phosphoenolpyruvate-dependent sugar phosphotransferase system (sugar PTS), a major carbohydrate active transport system, catalyzes the phosphorylation of incoming sugar substrates concomitantly with their translocation across the cell membrane. The enzyme II FruAB PTS system is involved in fructose transport. This chain is Multiphosphoryl transfer protein (fruB), found in Salmonella typhi.